Consider the following 401-residue polypeptide: Phosrestin-1 (401 aa).

It belongs to the arrestin family. In terms of tissue distribution, inner and outer segments, and the inner plexiform regions of the retina.

In terms of biological role, undergoes light-induced phosphorylation, probably plays an important role in the photoreceptor transduction. This is Phosrestin-1 (Arr2) from Drosophila miranda (Fruit fly).